A 428-amino-acid polypeptide reads, in one-letter code: Enolase (428 aa).

Q163 serves as a coordination point for (2R)-2-phosphoglycerate. E205 serves as the catalytic Proton donor. 3 residues coordinate Mg(2+): D242, E284, and D311. Residues K336, R365, S366, and K387 each contribute to the (2R)-2-phosphoglycerate site. K336 functions as the Proton acceptor in the catalytic mechanism.

The protein belongs to the enolase family. Mg(2+) is required as a cofactor.

The protein resides in the cytoplasm. It is found in the secreted. The protein localises to the cell surface. It carries out the reaction (2R)-2-phosphoglycerate = phosphoenolpyruvate + H2O. The protein operates within carbohydrate degradation; glycolysis; pyruvate from D-glyceraldehyde 3-phosphate: step 4/5. Its function is as follows. Catalyzes the reversible conversion of 2-phosphoglycerate (2-PG) into phosphoenolpyruvate (PEP). It is essential for the degradation of carbohydrates via glycolysis. The polypeptide is Enolase (Tropheryma whipplei (strain TW08/27) (Whipple's bacillus)).